The sequence spans 143 residues: Ribonuclease P protein component 2 (143 aa).

It belongs to the eukaryotic/archaeal RNase P protein component 2 family. Consists of a catalytic RNA component and at least 4-5 protein subunits.

The protein resides in the cytoplasm. The catalysed reaction is Endonucleolytic cleavage of RNA, removing 5'-extranucleotides from tRNA precursor.. In terms of biological role, part of ribonuclease P, a protein complex that generates mature tRNA molecules by cleaving their 5'-ends. The chain is Ribonuclease P protein component 2 from Saccharolobus solfataricus (strain ATCC 35092 / DSM 1617 / JCM 11322 / P2) (Sulfolobus solfataricus).